A 424-amino-acid polypeptide reads, in one-letter code: MLDIKFLRANFEEVKEKLQHRGEDLADFECFEELDTKRRELLVQTEELKSKRNEVSQQISMLKREKKDAEALILEMREVGEKIKGLDNELREVEEDLERLMLSIPNIPHESTPVGETEDDNVVVRTWGEVKEFNFEPKPHWDLATDLGIVDFERAGKVTGSRFVFYKGAGARLERALISFMLDLHTEEHGYEEVLPPYMVNRASMTGTGQLPKFEEDAFLIESEDYFLIPTAEVPVTNMHRDEILSAEQLPIRYAAFSSCFRSEAGSAGRDTRGLIRQHQFNKVELVKFVKPEESYEELEKLTNDAERVLQLLELPYRVMSMCTGDLGFTAAKKYDIEVWLPSYDTYREISSCSNFEAFQARRANIRFRREPNAKPEPVHTLNGSGLAIGRTVAAILENYQQEDGTIIIPEVLRPYMGGKTVIK.

Residue threonine 231–glutamate 233 coordinates L-serine. Arginine 262–glutamate 264 provides a ligand contact to ATP. An L-serine-binding site is contributed by glutamate 285. Glutamate 349–serine 352 serves as a coordination point for ATP. An L-serine-binding site is contributed by serine 385.

It belongs to the class-II aminoacyl-tRNA synthetase family. Type-1 seryl-tRNA synthetase subfamily. As to quaternary structure, homodimer. The tRNA molecule binds across the dimer.

Its subcellular location is the cytoplasm. The catalysed reaction is tRNA(Ser) + L-serine + ATP = L-seryl-tRNA(Ser) + AMP + diphosphate + H(+). It carries out the reaction tRNA(Sec) + L-serine + ATP = L-seryl-tRNA(Sec) + AMP + diphosphate + H(+). It participates in aminoacyl-tRNA biosynthesis; selenocysteinyl-tRNA(Sec) biosynthesis; L-seryl-tRNA(Sec) from L-serine and tRNA(Sec): step 1/1. Catalyzes the attachment of serine to tRNA(Ser). Is also able to aminoacylate tRNA(Sec) with serine, to form the misacylated tRNA L-seryl-tRNA(Sec), which will be further converted into selenocysteinyl-tRNA(Sec). The protein is Serine--tRNA ligase of Bacillus cytotoxicus (strain DSM 22905 / CIP 110041 / 391-98 / NVH 391-98).